Reading from the N-terminus, the 404-residue chain is Probable homogentisate phytyltransferase 1, chloroplastic (404 aa).

Residues 1 to 77 (MDSLRLRPSL…SHHRIPHRPT (77 aa)) constitute a chloroplast transit peptide. Positions 68–96 (SHHRIPHRPTSSSADASGQPLQSSAEAHD) are disordered. Positions 76-92 (PTSSSADASGQPLQSSA) are enriched in polar residues. 9 helical membrane-spanning segments follow: residues 119 to 139 (TVIG…ENLS), 144 to 164 (LFLT…IYIV), 184 to 204 (LASG…FAAM), 216 to 238 (PLFL…LPFL), 245 to 265 (VVAA…AFFL), 282 to 302 (LIFA…FKDI), 325 to 345 (VFWI…LMGA), 348 to 368 (ACLW…AILW), and 382 to 402 (ITSF…LIPL).

It belongs to the UbiA prenyltransferase family.

The protein localises to the plastid. The protein resides in the chloroplast thylakoid membrane. It carries out the reaction phytyl diphosphate + homogentisate + H(+) = 2-methyl-6-phytyl-1,4-benzene-1,4-diol + CO2 + diphosphate. It participates in cofactor biosynthesis; tocopherol biosynthesis. Its function is as follows. Involved in the synthesis of tocopherol (vitamin E). Catalyzes the condensation of homogentisate and phytyl diphosphate to form dimethylphytylhydroquinone. The polypeptide is Probable homogentisate phytyltransferase 1, chloroplastic (HPT1) (Oryza sativa subsp. japonica (Rice)).